Consider the following 342-residue polypeptide: N-acetyl-gamma-glutamyl-phosphate reductase (342 aa).

Cys147 is an active-site residue.

It belongs to the NAGSA dehydrogenase family. Type 1 subfamily.

It localises to the cytoplasm. The enzyme catalyses N-acetyl-L-glutamate 5-semialdehyde + phosphate + NADP(+) = N-acetyl-L-glutamyl 5-phosphate + NADPH + H(+). It participates in amino-acid biosynthesis; L-arginine biosynthesis; N(2)-acetyl-L-ornithine from L-glutamate: step 3/4. Functionally, catalyzes the NADPH-dependent reduction of N-acetyl-5-glutamyl phosphate to yield N-acetyl-L-glutamate 5-semialdehyde. The sequence is that of N-acetyl-gamma-glutamyl-phosphate reductase from Campylobacter jejuni subsp. jejuni serotype O:6 (strain 81116 / NCTC 11828).